The following is a 268-amino-acid chain: Tryptophan synthase alpha chain (268 aa).

Catalysis depends on proton acceptor residues glutamate 49 and aspartate 60.

This sequence belongs to the TrpA family. In terms of assembly, tetramer of two alpha and two beta chains.

It catalyses the reaction (1S,2R)-1-C-(indol-3-yl)glycerol 3-phosphate + L-serine = D-glyceraldehyde 3-phosphate + L-tryptophan + H2O. It functions in the pathway amino-acid biosynthesis; L-tryptophan biosynthesis; L-tryptophan from chorismate: step 5/5. The alpha subunit is responsible for the aldol cleavage of indoleglycerol phosphate to indole and glyceraldehyde 3-phosphate. This chain is Tryptophan synthase alpha chain, found in Escherichia coli O6:K15:H31 (strain 536 / UPEC).